The chain runs to 200 residues: NADH-quinone oxidoreductase subunit C (200 aa).

This sequence belongs to the complex I 30 kDa subunit family. As to quaternary structure, NDH-1 is composed of 14 different subunits. Subunits NuoB, C, D, E, F, and G constitute the peripheral sector of the complex.

It localises to the cell inner membrane. It carries out the reaction a quinone + NADH + 5 H(+)(in) = a quinol + NAD(+) + 4 H(+)(out). Functionally, NDH-1 shuttles electrons from NADH, via FMN and iron-sulfur (Fe-S) centers, to quinones in the respiratory chain. The immediate electron acceptor for the enzyme in this species is believed to be ubiquinone. Couples the redox reaction to proton translocation (for every two electrons transferred, four hydrogen ions are translocated across the cytoplasmic membrane), and thus conserves the redox energy in a proton gradient. The chain is NADH-quinone oxidoreductase subunit C from Ralstonia nicotianae (strain ATCC BAA-1114 / GMI1000) (Ralstonia solanacearum).